A 292-amino-acid polypeptide reads, in one-letter code: Protein/nucleic acid deglycase HchA (292 aa).

Polar residues predominate over residues 1-12 (MSQDVNKLSKQP). Positions 1–23 (MSQDVNKLSKQPTPDKAEDNAFF) are disordered. Catalysis depends on Cys-190, which acts as the Nucleophile.

Belongs to the peptidase C56 family. HchA subfamily.

Its subcellular location is the cytoplasm. It catalyses the reaction N(omega)-(1-hydroxy-2-oxopropyl)-L-arginyl-[protein] + H2O = lactate + L-arginyl-[protein] + H(+). It carries out the reaction N(6)-(1-hydroxy-2-oxopropyl)-L-lysyl-[protein] + H2O = lactate + L-lysyl-[protein] + H(+). The enzyme catalyses S-(1-hydroxy-2-oxopropyl)-L-cysteinyl-[protein] + H2O = lactate + L-cysteinyl-[protein] + H(+). The catalysed reaction is N(omega)-(1-hydroxy-2-oxoethyl)-L-arginyl-[protein] + H2O = L-arginyl-[protein] + glycolate + H(+). It catalyses the reaction N(6)-(1-hydroxy-2-oxoethyl)-L-lysyl-[protein] + H2O = glycolate + L-lysyl-[protein] + H(+). It carries out the reaction S-(1-hydroxy-2-oxoethyl)-L-cysteinyl-[protein] + H2O = glycolate + L-cysteinyl-[protein] + H(+). The enzyme catalyses N(2)-(1-hydroxy-2-oxopropyl)-dGTP + H2O = lactate + dGTP + H(+). The catalysed reaction is N(2)-(1-hydroxy-2-oxopropyl)-GTP + H2O = lactate + GTP + H(+). It catalyses the reaction N(2)-(1-hydroxy-2-oxopropyl)-GDP + H2O = lactate + GDP + H(+). It carries out the reaction N(2)-(1-hydroxy-2-oxopropyl)-GMP + H2O = lactate + GMP + H(+). The enzyme catalyses N(2)-(1-hydroxy-2-oxoethyl)-dGTP + H2O = dGTP + glycolate + H(+). The catalysed reaction is N(2)-(1-hydroxy-2-oxoethyl)-GTP + H2O = glycolate + GTP + H(+). It catalyses the reaction N(2)-(1-hydroxy-2-oxoethyl)-GDP + H2O = glycolate + GDP + H(+). It carries out the reaction N(2)-(1-hydroxy-2-oxoethyl)-GMP + H2O = glycolate + GMP + H(+). The enzyme catalyses an N(2)-(1-hydroxy-2-oxopropyl)-guanosine in RNA + H2O = a guanosine in RNA + lactate + H(+). The catalysed reaction is an N(2)-(1-hydroxy-2-oxopropyl)-2'-deoxyguanosine in DNA + H2O = a 2'-deoxyguanosine in DNA + lactate + H(+). It catalyses the reaction an N(2)-(1-hydroxy-2-oxoethyl)-guanosine in RNA + H2O = a guanosine in RNA + glycolate + H(+). It carries out the reaction an N(2)-(1-hydroxy-2-oxoethyl)-2'-deoxyguanosine in DNA + H2O = a 2'-deoxyguanosine in DNA + glycolate + H(+). In terms of biological role, protein and nucleotide deglycase that catalyzes the deglycation of the Maillard adducts formed between amino groups of proteins or nucleotides and reactive carbonyl groups of glyoxals. Thus, functions as a protein deglycase that repairs methylglyoxal- and glyoxal-glycated proteins, and releases repaired proteins and lactate or glycolate, respectively. Deglycates cysteine, arginine and lysine residues in proteins, and thus reactivates these proteins by reversing glycation by glyoxals. Acts on early glycation intermediates (hemithioacetals and aminocarbinols), preventing the formation of Schiff bases and advanced glycation endproducts (AGE). Also functions as a nucleotide deglycase able to repair glycated guanine in the free nucleotide pool (GTP, GDP, GMP, dGTP) and in DNA and RNA. Is thus involved in a major nucleotide repair system named guanine glycation repair (GG repair), dedicated to reversing methylglyoxal and glyoxal damage via nucleotide sanitization and direct nucleic acid repair. Plays an important role in protecting cells from carbonyl stress. This chain is Protein/nucleic acid deglycase HchA, found in Staphylococcus aureus (strain MRSA252).